The chain runs to 341 residues: UPF0284 protein Ta0078 (341 aa).

This sequence belongs to the UPF0284 family.

The protein is UPF0284 protein Ta0078 of Thermoplasma acidophilum (strain ATCC 25905 / DSM 1728 / JCM 9062 / NBRC 15155 / AMRC-C165).